The following is a 313-amino-acid chain: Catalase-related peroxidase (313 aa).

Histidine 28 is a catalytic residue. Tyrosine 294 is a binding site for heme.

It belongs to the catalase family. Monomer. Requires heme as cofactor.

Has an organic peroxide-dependent peroxidase activity. Exhibits strong peroxidase activity using organic hydroperoxides as cosubstrates, weak peroxidase activity using hydrogen peroxide and negligible catalase activity. May have a role in elimination of reactive oxygen species, in particular by deactivating hydroperoxides. This is Catalase-related peroxidase from Mycolicibacterium paratuberculosis (strain ATCC BAA-968 / K-10) (Mycobacterium paratuberculosis).